A 484-amino-acid chain; its full sequence is tRNA sulfurtransferase (484 aa).

One can recognise a THUMP domain in the interval R63 to Q167. Residues L185–M186, K267, G289, and Q298 contribute to the ATP site. C346 and C457 are joined by a disulfide. The Rhodanese domain maps to V405–P483. The Cysteine persulfide intermediate role is filled by C457.

Belongs to the ThiI family.

It is found in the cytoplasm. It catalyses the reaction [ThiI sulfur-carrier protein]-S-sulfanyl-L-cysteine + a uridine in tRNA + 2 reduced [2Fe-2S]-[ferredoxin] + ATP + H(+) = [ThiI sulfur-carrier protein]-L-cysteine + a 4-thiouridine in tRNA + 2 oxidized [2Fe-2S]-[ferredoxin] + AMP + diphosphate. The catalysed reaction is [ThiS sulfur-carrier protein]-C-terminal Gly-Gly-AMP + S-sulfanyl-L-cysteinyl-[cysteine desulfurase] + AH2 = [ThiS sulfur-carrier protein]-C-terminal-Gly-aminoethanethioate + L-cysteinyl-[cysteine desulfurase] + A + AMP + 2 H(+). Its pathway is cofactor biosynthesis; thiamine diphosphate biosynthesis. Functionally, catalyzes the ATP-dependent transfer of a sulfur to tRNA to produce 4-thiouridine in position 8 of tRNAs, which functions as a near-UV photosensor. Also catalyzes the transfer of sulfur to the sulfur carrier protein ThiS, forming ThiS-thiocarboxylate. This is a step in the synthesis of thiazole, in the thiamine biosynthesis pathway. The sulfur is donated as persulfide by IscS. The chain is tRNA sulfurtransferase from Pseudomonas aeruginosa (strain LESB58).